Reading from the N-terminus, the 358-residue chain is Dynein axonemal assembly factor 10 (358 aa).

6 WD repeats span residues 64–106, 116–155, 163–206, 208–250, 258–298, and 320–358; these read EKPK…TPVY, NCIDGVGGVGIGDGAPEIVTGSRDGTVKVWDPRQKDTPVA, EAKR…VRWE, NIKN…PTKG, AHKS…QRSR, and LSTQPISSLDWSPDKKGLCVCTSFDQTVRVLIVTKLNRL.

In terms of assembly, interacts with PIH1D1; the interaction associates DNAAF10 with the R2TP complex. Interacts with several dynein axonemal assembly factors.

Its subcellular location is the dynein axonemal particle. Functionally, key assembly factor specifically required for the stability of axonemal dynein heavy chains in cytoplasm. The protein is Dynein axonemal assembly factor 10 (dnaaf10) of Xenopus laevis (African clawed frog).